Here is a 212-residue protein sequence, read N- to C-terminus: Eukaryotic translation initiation factor 4E-1 (212 aa).

A disulfide bridge connects residues C125 and C129.

The protein belongs to the eukaryotic initiation factor 4E family. EIF4F is a multi-subunit complex, the composition of which varies with external and internal environmental conditions. It is composed of at least EIF4A, EIF4E and EIF4G. EIF4E is also known to interact with other partners, including pgl-1. Interacts with ifet-1. As to expression, enriched in the germline from L3 larvae to adults; regions of the gonad undergoing spermatogenesis. Expressed in germ granules (P granules); when associated with pgl-1.

The protein resides in the cytoplasm. Recognizes and binds the 7-methylguanosine-containing mRNA cap during an early step in the initiation of protein synthesis and facilitates ribosome binding by inducing the unwinding of the mRNAs secondary structures. All 5 eIF4E proteins bind monomethyl cap structures. Only ife-1, ife-2 and ife-5 bind trimethyl cap structures which result from trans-splicing. Translation of trimethyl cap structure mRNAs may be regulated by intracellular redox state; disulfide bonds change the width and depth of the cap-binding cavity determining selectivity to mRNA caps. Required for progression through meiotic divisions during spermatogenesis and for the production of viable sperm. It is not required during oogenesis. The sequence is that of Eukaryotic translation initiation factor 4E-1 (ife-1) from Caenorhabditis elegans.